A 165-amino-acid polypeptide reads, in one-letter code: Ribosome maturation factor RimM (165 aa).

Residues 94–165 (EDEFYIADLN…YVILNYQTKV (72 aa)) form the PRC barrel domain.

The protein belongs to the RimM family. As to quaternary structure, binds ribosomal protein uS19.

It is found in the cytoplasm. Its function is as follows. An accessory protein needed during the final step in the assembly of 30S ribosomal subunit, possibly for assembly of the head region. Essential for efficient processing of 16S rRNA. May be needed both before and after RbfA during the maturation of 16S rRNA. It has affinity for free ribosomal 30S subunits but not for 70S ribosomes. This Rickettsia typhi (strain ATCC VR-144 / Wilmington) protein is Ribosome maturation factor RimM.